The following is a 448-amino-acid chain: U-box domain-containing protein 30 (448 aa).

Positions aspartate 63–leucine 137 constitute a U-box domain. 2 ARM repeats span residues leucine 179–leucine 219 and serine 221–glutamate 260.

It catalyses the reaction S-ubiquitinyl-[E2 ubiquitin-conjugating enzyme]-L-cysteine + [acceptor protein]-L-lysine = [E2 ubiquitin-conjugating enzyme]-L-cysteine + N(6)-ubiquitinyl-[acceptor protein]-L-lysine.. It participates in protein modification; protein ubiquitination. Functions as an E3 ubiquitin ligase. This is U-box domain-containing protein 30 (PUB30) from Arabidopsis thaliana (Mouse-ear cress).